Consider the following 384-residue polypeptide: Probable protein phosphatase 2C 42 (384 aa).

The 301-residue stretch at 58–358 (DFSMAVIQAN…DDITVIVVFL (301 aa)) folds into the PPM-type phosphatase domain. 4 residues coordinate Mn(2+): D89, G90, D290, and D349.

This sequence belongs to the PP2C family. The cofactor is Mg(2+). Mn(2+) serves as cofactor.

The catalysed reaction is O-phospho-L-seryl-[protein] + H2O = L-seryl-[protein] + phosphate. It catalyses the reaction O-phospho-L-threonyl-[protein] + H2O = L-threonyl-[protein] + phosphate. Dephosphorylates and represses plasma membrane H(+)-ATPases (PM H(+)-ATPases, e.g. AHA1 and AHA2), thus influencing negatively plant growth and fitness. Promotes the apical hook maintenance of etiolated seedlings. The sequence is that of Probable protein phosphatase 2C 42 from Arabidopsis thaliana (Mouse-ear cress).